The primary structure comprises 189 residues: Elongation factor P-like protein (189 aa).

It belongs to the elongation factor P family.

This is Elongation factor P-like protein from Vibrio atlanticus (strain LGP32) (Vibrio splendidus (strain Mel32)).